The sequence spans 207 residues: 2,3-bisphosphoglycerate-dependent phosphoglycerate mutase (207 aa).

Substrate-binding positions include 10–17 (RHGQSEWN), 23–24 (TG), arginine 62, 89–92 (ERDY), lysine 100, 116–117 (RR), and 160–161 (GN). Histidine 11 (tele-phosphohistidine intermediate) is an active-site residue. The active-site Proton donor/acceptor is the glutamate 89.

Belongs to the phosphoglycerate mutase family. BPG-dependent PGAM subfamily. As to quaternary structure, homodimer.

The enzyme catalyses (2R)-2-phosphoglycerate = (2R)-3-phosphoglycerate. It functions in the pathway carbohydrate degradation; glycolysis; pyruvate from D-glyceraldehyde 3-phosphate: step 3/5. Functionally, catalyzes the interconversion of 2-phosphoglycerate and 3-phosphoglycerate. The sequence is that of 2,3-bisphosphoglycerate-dependent phosphoglycerate mutase from Xanthobacter autotrophicus (strain ATCC BAA-1158 / Py2).